A 334-amino-acid chain; its full sequence is tRNA U34 carboxymethyltransferase (334 aa).

Carboxy-S-adenosyl-L-methionine is bound by residues Lys-91, Trp-105, Lys-110, Gly-130, 152-154 (DPT), 181-182 (IE), Met-196, Tyr-200, and Arg-315.

Belongs to the class I-like SAM-binding methyltransferase superfamily. CmoB family. In terms of assembly, homotetramer.

The catalysed reaction is carboxy-S-adenosyl-L-methionine + 5-hydroxyuridine(34) in tRNA = 5-carboxymethoxyuridine(34) in tRNA + S-adenosyl-L-homocysteine + H(+). Its function is as follows. Catalyzes carboxymethyl transfer from carboxy-S-adenosyl-L-methionine (Cx-SAM) to 5-hydroxyuridine (ho5U) to form 5-carboxymethoxyuridine (cmo5U) at position 34 in tRNAs. In Klebsiella pneumoniae (strain 342), this protein is tRNA U34 carboxymethyltransferase.